A 458-amino-acid polypeptide reads, in one-letter code: Dynein regulatory complex protein 10 (458 aa).

Coiled-coil stretches lie at residues 96-137 (GQTL…HKVN), 209-255 (IQDI…KNHL), and 285-379 (QVRL…IRAE). The 30-residue stretch at 397 to 426 (MVRAATLIQAVWKGYLVRSILRSKKKKRGK) folds into the IQ domain. Residues 419–458 (SKKKKRGKGKGKDKGKGKEKPKEEKAKEKKPKAKGKGKKK) are disordered. The segment covering 428–445 (KGKDKGKGKEKPKEEKAK) has biased composition (basic and acidic residues). Residues 446-458 (EKKPKAKGKGKKK) show a composition bias toward basic residues.

The protein belongs to the DRC10 family. In terms of assembly, component of the nexin-dynein regulatory complex (N-DRC). Interacts with CFAP52.

The protein localises to the cytoplasm. The protein resides in the cytoskeleton. Its subcellular location is the flagellum axoneme. Functionally, component of the nexin-dynein regulatory complex (N-DRC), a key regulator of ciliary/flagellar motility which maintains the alignment and integrity of the distal axoneme and regulates microtubule sliding in motile axonemes. The chain is Dynein regulatory complex protein 10 (Iqcd) from Mus musculus (Mouse).